The primary structure comprises 142 residues: Fusaric acid resistance protein FusB (142 aa).

The interval 73-142 (AAPCSRKAST…ASCSPAIRPR (70 aa)) is disordered. Low complexity predominate over residues 81–142 (STGSPARSSG…ASCSPAIRPR (62 aa)).

Involved in the resistance (detoxification) of the fungal toxin fusaric acid. This is Fusaric acid resistance protein FusB (fusB) from Burkholderia cepacia (Pseudomonas cepacia).